The chain runs to 263 residues: uncharacterized protein (263 aa).

31–38 (GPTGSGKT) is an ATP binding site.

The protein belongs to the CbbQ/NirQ/NorQ/GpvN family.

This is an uncharacterized protein from Staphylococcus haemolyticus (strain JCSC1435).